Reading from the N-terminus, the 494-residue chain is UPF0371 protein SP_0341 (494 aa).

Belongs to the UPF0371 family.

The chain is UPF0371 protein SP_0341 from Streptococcus pneumoniae serotype 4 (strain ATCC BAA-334 / TIGR4).